The primary structure comprises 207 residues: Large ribosomal subunit protein uL4 (207 aa).

Residues 56–76 (EVRGGGRKPWRQKGTGRARAG) form a disordered region. Over residues 60 to 71 (GGRKPWRQKGTG) the composition is skewed to basic residues.

The protein belongs to the universal ribosomal protein uL4 family. As to quaternary structure, part of the 50S ribosomal subunit.

Its function is as follows. One of the primary rRNA binding proteins, this protein initially binds near the 5'-end of the 23S rRNA. It is important during the early stages of 50S assembly. It makes multiple contacts with different domains of the 23S rRNA in the assembled 50S subunit and ribosome. In terms of biological role, forms part of the polypeptide exit tunnel. The sequence is that of Large ribosomal subunit protein uL4 from Desulfitobacterium hafniense (strain DSM 10664 / DCB-2).